Here is a 296-residue protein sequence, read N- to C-terminus: Ribosomal RNA small subunit methyltransferase A (296 aa).

S-adenosyl-L-methionine contacts are provided by Asn31, Leu33, Gly58, Glu79, Asp111, and Asn136.

This sequence belongs to the class I-like SAM-binding methyltransferase superfamily. rRNA adenine N(6)-methyltransferase family. RsmA subfamily.

It is found in the cytoplasm. The catalysed reaction is adenosine(1518)/adenosine(1519) in 16S rRNA + 4 S-adenosyl-L-methionine = N(6)-dimethyladenosine(1518)/N(6)-dimethyladenosine(1519) in 16S rRNA + 4 S-adenosyl-L-homocysteine + 4 H(+). In terms of biological role, specifically dimethylates two adjacent adenosines (A1518 and A1519) in the loop of a conserved hairpin near the 3'-end of 16S rRNA in the 30S particle. May play a critical role in biogenesis of 30S subunits. The protein is Ribosomal RNA small subunit methyltransferase A of Lactobacillus delbrueckii subsp. bulgaricus (strain ATCC BAA-365 / Lb-18).